Consider the following 141-residue polypeptide: Mu-like prophage FluMu protein gp36 (141 aa).

The protein to phage Mu protein gp36.

The polypeptide is Mu-like prophage FluMu protein gp36 (Haemophilus influenzae (strain ATCC 51907 / DSM 11121 / KW20 / Rd)).